The primary structure comprises 416 residues: Keratin, type I cuticular Ha1 (416 aa).

Positions 1–56 (MPYNFCLPSLSCRTSCSSRPCVPPSCHSCTLPGACNIPANVSNCNWFCEGSFNGSE) are head. In terms of domain architecture, IF rod spans 56 to 367 (EKETMQFLND…SLLESEDCNL (312 aa)). Residues 57–91 (KETMQFLNDRLASYLEKVRQLERDNAELENLIRER) are coil 1A. Residues 92-102 (SQQQEPLLCPS) form a linker 1 region. Residues 103 to 203 (YQSYFKTIEE…HEQEVNTLRC (101 aa)) are coil 1B. The linker 12 stretch occupies residues 204-219 (QLGDRLNVEVDAAPTV). The coil 2 stretch occupies residues 220 to 363 (DLNRVLNETR…NTYRSLLESE (144 aa)). Positions 364–416 (DCNLPSNPCATTNACSKPIGPCLSNPCTSCVPPAPCTPCAPRPRCGPCNSFVR) are tail.

Belongs to the intermediate filament family. As to expression, present in scalp but not in hairless skin. Abundantly expressed in the differentiating cortex of growing (anagen) hair. Expression is restricted to the keratinocytes of the hair cortex and is absent from inner root sheath and medulla.

The protein is Keratin, type I cuticular Ha1 (KRT31) of Homo sapiens (Human).